Consider the following 1207-residue polypeptide: DNA-directed RNA polymerase subunit beta' (1207 aa).

Zn(2+) contacts are provided by Cys60, Cys62, Cys75, and Cys78. The Mg(2+) site is built by Asp450, Asp452, and Asp454. Cys818, Cys892, Cys899, and Cys902 together coordinate Zn(2+).

The protein belongs to the RNA polymerase beta' chain family. As to quaternary structure, the RNAP catalytic core consists of 2 alpha, 1 beta, 1 beta' and 1 omega subunit. When a sigma factor is associated with the core the holoenzyme is formed, which can initiate transcription. It depends on Mg(2+) as a cofactor. Zn(2+) serves as cofactor.

The catalysed reaction is RNA(n) + a ribonucleoside 5'-triphosphate = RNA(n+1) + diphosphate. Its function is as follows. DNA-dependent RNA polymerase catalyzes the transcription of DNA into RNA using the four ribonucleoside triphosphates as substrates. The chain is DNA-directed RNA polymerase subunit beta' from Lactococcus lactis subsp. lactis (strain IL1403) (Streptococcus lactis).